A 364-amino-acid polypeptide reads, in one-letter code: MSLSHLSLKYFRNIEALTLEPVNGVNIIYGENGSGKTSLLEAIYYLSHGKSFRTSKHKSIIAHQQEQFVIHGRKAIHDLSIPIGISKTQAGETNLKIQGKASRKISELAQLMPVQIITPESYSLFFGGPKERRKFLDLGLFHVEHEFFFLWQSFNKVLKQRNALLKSKPKNYFDQIKFWDKEFVRLAEQINKLRMAYISRFKQQFFDKMCAELTLIRDLEISFNAGWKESESLSDALELNFERDARQGFTSKGPHKADFSFSVAGSSVENIFSRGQLKLLLYALKVTQNSLIESETDKQSILLIDDLPSELSEDTKEKVGQLLAHCSSQIFISSILSESISAVVEPMQRELQMFHVKHGNLITR.

Position 30-37 (30-37 (GENGSGKT)) interacts with ATP.

This sequence belongs to the RecF family.

The protein resides in the cytoplasm. The RecF protein is involved in DNA metabolism; it is required for DNA replication and normal SOS inducibility. RecF binds preferentially to single-stranded, linear DNA. It also seems to bind ATP. This chain is DNA replication and repair protein RecF, found in Pseudoalteromonas translucida (strain TAC 125).